We begin with the raw amino-acid sequence, 1156 residues long: MGDTAPPQAPAGGLGGASGAGLLGGGSVTPRVHSAIVERLRARIAVCRQHHLSCEGRYERGRAESSDRERESTLQLLSLVQHGQGARKAGKHTKATATAATTTAPPPPPAAPPAASQAAATAAPPPPPDYHHHHQQHLLNSSNNGGSGGINGEQQPPASTPGDQRNSALIALQGSLKRKQVVNLSPANSKRPNGFVDNSFLDIKRIRVGENLSAGQGGLQINNGQSQIMSGTLPMSQAPLRKTNTLPSHTHSPGNGLFNMGLKEVKKEPGETLSCSKHMDGQMTQENIFPNRYGDDPGEQLMDPELQELFNELTNISVPPMSDLELENMINATIKQDDPFNIDLGQQSQRSTPRPSLPMEKIVIKSEYSPGLTQGPSGSPQLRPPSAGPAFSMANSALSTSSPIPSVPQSQAQPQTGSGASRALPSWQEVSHAQQLKQIAANRQQHARMQQHQQQHQPTNWSALPSSAGPSPGPFGQEKIPSPSFGQQTFSPQSSPMPGVAGGSGQSKVMANYMYKAGPSAQGGHLDVLMQQKPQDLSRSFINNPHPAMEPRQGNTKPLFHFNSDQANQQMPSVLPSQNKPSLLHYTQQQQQQQQQQQQQQQQQQQQQQQQQQQQQQQQQQSSISAQQQQQQQSSISAQQQQQQQQQQQQQQQQQQQQQQQQQQQPSSQPAQSLPSQPLLRSPLPLQQKLLLQQMQNQPIAGMGYQVSQQQRQDQHSVVGQNTGPSPSPNPCSNPNTGSGYMNSQQSLLNQQLMGKKQTLQRQIMEQKQQLLLQQQMLADAEKIAPQDQINRHLSRPPPDYKDQRRNVGNMQPTAQYSGGSSTISLNSNQALANPVSTHTILTPNSSLLSTSHGTRMPSLSTAVQNMGMYGNLPCNQPNTYSVTSGMNQLTQQRNPKQLLANQNNPMMPRPPTLGPSNNNNVATFGAGSVGNSQQLRPNLTHSMASMPPQRTSNVMITSNTTAPNWASQEGTSKQQEALTSAGVRFPTGTPAAYTPNQSLQQAVGSQQFSQRAVAPPNQLTPAVQMRPMNQMSQTLNGQTMGPLRGLNLRPNQLSTQILPNLNQSGTGLNQSRTGINQPPSLTPSNFPSPNQSSRAFQGTDHSSDLAFDFLSQQNDNMGPALNSDADFIDSLLKTEPGNDDWMKDINLDEILGNNS.

The disordered stretch occupies residues 81-165 (QHGQGARKAG…PPASTPGDQR (85 aa)). Residues 113 to 122 (PAASQAAATA) are compositionally biased toward low complexity. The segment covering 153–165 (EQQPPASTPGDQR) has biased composition (polar residues). Phosphoserine is present on Ser175. Disordered stretches follow at residues 340–359 (FNID…SLPM), 369–506 (SPGL…GSGQ), 531–630 (QQKP…QQQQ), 658–680 (QQQQ…QPLL), 705–743 (YQVS…GYMN), 784–820 (IAPQ…YSGG), and 1059–1100 (LPNL…FQGT). Composition is skewed to polar residues over residues 344-354 (LGQQSQRSTPR), 371-380 (GLTQGPSGSP), 393-419 (MANS…TGSG), and 428-437 (QEVSHAQQLK). Residues 440–470 (AANRQQHARMQQHQQQHQPTNWSALPSSAGP) are compositionally biased toward low complexity. Polar residues-rich tracts occupy residues 484–496 (SFGQ…QSSP), 532–543 (QKPQDLSRSFIN), and 563–587 (NSDQ…LHYT). Residues 588–630 (QQQQQQQQQQQQQQQQQQQQQQQQQQQQQQQQQQSSISAQQQQ) show a composition bias toward low complexity. Low complexity-rich tracts occupy residues 706–725 (QVSQ…NTGP) and 733–743 (SNPNTGSGYMN). Polar residues predominate over residues 807–820 (NVGNMQPTAQYSGG).

The protein belongs to the mastermind family. In terms of assembly, interacts through its N-terminal region with the ankyrin repeat region of the Notch proteins NOTCH1, NOTCH2, NOTCH3 and NOTCH4. Forms a DNA-binding complex with Notch proteins and RBPSUH/RBP-J kappa. Widely expressed with high levels detected in placenta, salivary gland and skeletal muscle.

Its subcellular location is the nucleus speckle. Its function is as follows. Acts as a transcriptional coactivator for NOTCH proteins. Has been shown to amplify NOTCH-induced transcription of HES1. Potentiates activation by NOTCH3 and NOTCH4 more efficiently than MAML1 or MAML3. This chain is Mastermind-like protein 2 (MAML2), found in Homo sapiens (Human).